The sequence spans 409 residues: Casein kinase II subunit alpha-1 (409 aa).

Positions 1–35 are cleaved as a signal peptide; the sequence is MIDTLFFLFFLFFDSPLRRLLLLCAVLALRAPTAH. Asn-72 is a glycosylation site (N-linked (GlcNAc...) asparagine). A Protein kinase domain is found at 110 to 395; that stretch reads YEVVRKVGRG…AKEAMAHAYF (286 aa). ATP is bound by residues 116–124 and Lys-139; that span reads VGRGKYSEV. Asn-188 carries N-linked (GlcNAc...) asparagine glycosylation. The Proton acceptor role is filled by Asp-227.

The protein belongs to the protein kinase superfamily. Ser/Thr protein kinase family. CK2 subfamily. As to quaternary structure, heterotetramer of two catalytic alpha subunits and two regulatory beta subunits. As to expression, seems to be present in all plant organs. But seems to be less expressed than CKA2.

The protein localises to the nucleus. Its subcellular location is the nucleolus. It catalyses the reaction L-seryl-[protein] + ATP = O-phospho-L-seryl-[protein] + ADP + H(+). It carries out the reaction L-threonyl-[protein] + ATP = O-phospho-L-threonyl-[protein] + ADP + H(+). Its activity is regulated as follows. Inhibited by heparin. Casein kinases are operationally defined by their preferential utilization of acidic proteins such as caseins as substrates. Phosphorylates casein in vitro. The alpha chain contains the catalytic site. The tetrameric holoenzyme CK2, composed of two alpha and two beta subunits, phosphorylates the transcription factor GBFl, resulting in stimulation of its DNA binding activity. CK2 phosphorylates the transcription factor PIF1 after an exposure to light, resulting in a proteasome-dependent degradation of PIF1 and promotion of photomorphogenesis. CK2 phosphorylates translation initiation factors. May participate in the regulation of the initiation of translation. Acts as a circadian clock component that maintains the correct period length through phosphorylation of CCA1. Required for the maintenance and control of genomic stability and chromatin structure. May act as an ectokinase that phosphorylates several extracellular proteins. The polypeptide is Casein kinase II subunit alpha-1 (Arabidopsis thaliana (Mouse-ear cress)).